The primary structure comprises 236 residues: Small ribosomal subunit protein uS2c (236 aa).

The protein belongs to the universal ribosomal protein uS2 family.

Its subcellular location is the plastid. It is found in the chloroplast. The protein is Small ribosomal subunit protein uS2c (rps2) of Amborella trichopoda.